A 790-amino-acid polypeptide reads, in one-letter code: MRLPWVNGILAFLSSQVLQCLCVQELHVNAETANKISAAGRRMRCSSPLDILILLDGSNSIGRGSFERSKHFASKLCDALDIGSDLIRVGAMQYSGAPQVEFRLDSSFSKAAIKEKIKSIVFKGGPTETGLALKYIVWKGFPGGRPASVPKILIIVSDGKSQGNIKLPAAQIKGEDIEVFTVGVKFPRWEELHALSSEPQEAHVLFAEHVDDAVNGLATSLTNSSLCSSVPHGCSVQSFPCTRKTLETVKELTGNYMCWKGSARPGTVFPGHCPFYSWRRFYNKHQAQCHRTVCPDPCDSQPCKNGGTCIAEGQDKYHCVCPAGFGGDTECAPQLSLECNIDLLFLVDSSDTTSLEAFMQHKSFLKRFIQASLSDESPLNVGVAQYSNEVQMVVKIGEYQSMAELLKHIDNMRFMGGGLFTGKALRYVTQYGFKSTPVFSDVRDDLPRLVVLLTGSKSQDSVTGPATYARDQEVFLIGVTSDSNKGEMAEIVGNPLNLVTYSNPQQLFNQLPQLQKRICSIDVQGCQAQPLDLAFVLDASTAVGQEKFNRLKNFVTMVSLQFDINRDVTQIGLVTYSSRPETVFGLDTHDSGSSLLQGIGRASYMGGSASTGSALLRVYNDVMTVQKGARPGVNKAVVVITDGRGAEDAAVPAQKLRDNGIMVYVIGIGNIQRNSLLRLAGSEKFLISVPSYESLGHYEDSVVQRVCEDAKSPVNLCKPNPCMNDGVCILRQGSYRCDCRGWDGPHCETRILRGDSHWPQGLHSRSRQQRHSRKRRLKSVSGSRSSRKKP.

The signal sequence occupies residues 1–22 (MRLPWVNGILAFLSSQVLQCLC). The region spanning 50–221 (DILILLDGSN…DAVNGLATSL (172 aa)) is the VWFA 1 domain. The EGF-like 1 domain occupies 295–332 (PDPCDSQPCKNGGTCIAEGQDKYHCVCPAGFGGDTECA). 3 cysteine pairs are disulfide-bonded: cysteine 298/cysteine 309, cysteine 303/cysteine 319, and cysteine 321/cysteine 331. 2 consecutive VWFA domains span residues 342–518 (DLLF…QKRI) and 532–702 (DLAF…EDSV). The 36-residue stretch at 713–748 (PVNLCKPNPCMNDGVCILRQGSYRCDCRGWDGPHCE) folds into the EGF-like 2 domain. Intrachain disulfides connect cysteine 717–cysteine 728, cysteine 722–cysteine 737, and cysteine 739–cysteine 747. Residues 758–790 (WPQGLHSRSRQQRHSRKRRLKSVSGSRSSRKKP) form a disordered region. Residues 764-778 (SRSRQQRHSRKRRLK) are compositionally biased toward basic residues.

In terms of assembly, forms monomers and multimers.

The protein localises to the secreted. The chain is von Willebrand factor A domain-containing protein 2 (vwa2) from Xenopus laevis (African clawed frog).